A 278-amino-acid chain; its full sequence is HAUS augmin-like complex subunit 1 (278 aa).

Coiled-coil stretches lie at residues 49–79, 124–177, and 249–277; these read RDVYLVIEDLKQKASEYESEAKYLQDLLMES, SDLF…KVDN, and SLAQVKIEEAKRELDSIEAELTRRVDMME.

This sequence belongs to the HAUS1 family. As to quaternary structure, component of the HAUS augmin-like complex. The complex interacts with the gamma-tubulin ring complex and this interaction is required for spindle assembly. Associates with microtubules. The interaction with microtubules is strong during mitosis, while it is weak or absent during interphase. It is unclear whether this interaction is direct or indirect. Interacts with EML3 (phosphorylated at 'Thr-881'). Widely expressed. Expressed in pancreas, kidney, skeletal muscle, liver and heart. Weakly expressed in lung, brain and placenta.

Its subcellular location is the cytoplasm. The protein resides in the cytoskeleton. It is found in the microtubule organizing center. The protein localises to the centrosome. It localises to the spindle. Its subcellular location is the spindle pole. In terms of biological role, contributes to mitotic spindle assembly, maintenance of centrosome integrity and completion of cytokinesis as part of the HAUS augmin-like complex. This is HAUS augmin-like complex subunit 1 (HAUS1) from Homo sapiens (Human).